The sequence spans 448 residues: Cysteine--tRNA ligase (448 aa).

Cys29 provides a ligand contact to Zn(2+). The 'HIGH' region motif lies at 31–41 (PTVYNYIHIGN). Zn(2+) contacts are provided by Cys212, His237, and Glu241. The 'KMSKS' region motif lies at 269–273 (KMSKS). Lys272 provides a ligand contact to ATP.

This sequence belongs to the class-I aminoacyl-tRNA synthetase family. Monomer. Zn(2+) serves as cofactor.

The protein localises to the cytoplasm. It carries out the reaction tRNA(Cys) + L-cysteine + ATP = L-cysteinyl-tRNA(Cys) + AMP + diphosphate. In Streptococcus equi subsp. zooepidemicus (strain MGCS10565), this protein is Cysteine--tRNA ligase.